A 444-amino-acid polypeptide reads, in one-letter code: Phosphoglucosamine mutase (444 aa).

The active-site Phosphoserine intermediate is Ser102. Ser102, Asp241, Asp243, and Asp245 together coordinate Mg(2+). Position 102 is a phosphoserine (Ser102).

The protein belongs to the phosphohexose mutase family. It depends on Mg(2+) as a cofactor. In terms of processing, activated by phosphorylation.

The enzyme catalyses alpha-D-glucosamine 1-phosphate = D-glucosamine 6-phosphate. Catalyzes the conversion of glucosamine-6-phosphate to glucosamine-1-phosphate. The protein is Phosphoglucosamine mutase of Glaesserella parasuis serovar 5 (strain SH0165) (Haemophilus parasuis).